Consider the following 573-residue polypeptide: Developmental and secondary metabolism regulator veA (573 aa).

The segment covering 1 to 11 has biased composition (pro residues); it reads MATLAAPPPPL. 2 disordered regions span residues 1–24 and 39–63; these read MATL…SRIT and QPKR…DPPP. Positions 27–230 constitute a Velvet domain; that stretch reads GKKITYKLNI…AEQGCRVRIR (204 aa). Positions 41 to 46 match the Nuclear localization signal motif; it reads KRARAC. A phosphothreonine mark is found at Thr-167 and Thr-170. Residue Ser-183 is modified to Phosphoserine. Disordered stretches follow at residues 236-295, 307-367, and 384-573; these read RRRG…RRPS, YQRP…SYQS, and SHIP…ATMR. The span at 241–260 shows a compositional bias: basic and acidic residues; sequence KRTEDYDYDNERGYNNRRPD. The residue at position 254 (Tyr-254) is a Phosphotyrosine. Composition is skewed to pro residues over residues 318–339 and 347–361; these read SSTP…PSTP and PAPP…PPLH. The segment covering 387 to 412 has biased composition (low complexity); sequence PQQTTTPTHPYSPRSSISHSRNQSIS. Polar residues predominate over residues 452-493; it reads PSVNSRSKTPSNMITSLPPIQSLSELPSTTSQPSSAIGSSPA. The segment at 459-498 is PEST; sequence KTPSNMITSLPPIQSLSELPSTTSQPSSAIGSSPANEPGP. Over residues 510-522 the composition is skewed to basic and acidic residues; sequence RTYEESFGHDDRP.

This sequence belongs to the velvet family. VeA subfamily. Component of the heterotrimeric velvet complex composed of laeA, veA and velB; VeA acting as a bridging protein between laeA and velB. Interacts with the light-sensing phytochrome fphA. Interacts with llmF. In terms of processing, phosphorylated at Thr-167, Thr-170, Ser-183 and Tyr-254. Thr-167 should be phosphorylated and T170 and S183 should be dephosphorylated to achieve light induction of conidiation. Phosphorylation of Ser-183 and Tyr-254 influence sterigmatocystin production in a light-independent manner. Phosphorylation of Thr-167 and Thr-170 modulates expression of veA.

Its subcellular location is the nucleus. It is found in the cytoplasm. In terms of biological role, component of the velvet transcription factor complex that controls sexual/asexual developmental ratio in response to light, promoting sexual development in the darkness while stimulating asexual sporulation under illumination. The velvet complex acts as a global regulator for secondary metabolite gene expression. Controls the expression of the sterigmatocystin and penicillin gene clusters. Represses the cryptic ors gene cluster producing orsellinic acid and its F9775 derivatives in a laeA-independent manner. Required for full induction of faoA gene expression by fructosyl amines. Positively regulates the expression of the early sexual development gene esdC. Controls the expression of mannoprotein mnpA. The sequence is that of Developmental and secondary metabolism regulator veA from Emericella nidulans (strain FGSC A4 / ATCC 38163 / CBS 112.46 / NRRL 194 / M139) (Aspergillus nidulans).